The following is a 449-amino-acid chain: Transport protein ComB (449 aa).

Residues 1-20 (MKPEFLESAEFYNRRYHNFS) are Cytoplasmic-facing. A helical membrane pass occupies residues 21–41 (SSVIVPMALLLVFLLGFATVA). The Extracellular portion of the chain corresponds to 42–449 (EKEMSLSTRA…YYLDQFLNKE (408 aa)).

Belongs to the membrane fusion protein (MFP) (TC 8.A.1) family.

It localises to the cell membrane. Functionally, required for induction of competence. The chain is Transport protein ComB (comB) from Streptococcus pneumoniae (strain ATCC BAA-255 / R6).